Here is a 481-residue protein sequence, read N- to C-terminus: Hyaluronidase-4 (481 aa).

Topologically, residues 1–11 are cytoplasmic; that stretch reads MQLLPEGQLRL. Residues 12-32 form a helical membrane-spanning segment; the sequence is CVFQPVHLTSGLLILFILKSI. Topologically, residues 33-455 are extracellular; that stretch reads SSLKPARLPV…CREMTEASGP (423 aa). 5 disulfides stabilise this stretch: Cys-59–Cys-351, Cys-223–Cys-237, Cys-376–Cys-387, Cys-381–Cys-435, and Cys-437–Cys-446. 2 N-linked (GlcNAc...) asparagine glycosylation sites follow: Asn-64 and Asn-115. The active-site Proton donor is the Glu-147. Asn-232 and Asn-343 each carry an N-linked (GlcNAc...) asparagine glycan. Residues 456–476 traverse the membrane as a helical segment; it reads SGLSLSSSSVITLCLLVLAGY. Residues 477–481 are Cytoplasmic-facing; the sequence is QSIQL.

It belongs to the glycosyl hydrolase 56 family.

Its subcellular location is the membrane. The enzyme catalyses Random hydrolysis of (1-&gt;4)-linkages between N-acetyl-beta-D-glucosamine and D-glucuronate residues in hyaluronate.. Functionally, endo-hyaluronidase that degrades hyaluronan to smaller oligosaccharide fragments. Also has chondroitin sulfate hydrolase activity, The best substrate being the galactosaminidic linkage in the sequence of a trisulfated tetrasaccharide. The polypeptide is Hyaluronidase-4 (Hyal4) (Mus musculus (Mouse)).